A 201-amino-acid polypeptide reads, in one-letter code: MYB-like transcription factor EOBI (201 aa).

HTH myb-type domains follow at residues 10-62 (DVEV…LNYL) and 63-117 (RPDV…QKHI). 2 DNA-binding regions (H-T-H motif) span residues 38–62 (WNSL…LNYL) and 90–113 (WSKI…RTRI). A disordered region spans residues 121–170 (DQNMKKPSKCEQNDQKAISTSQASTGPTDTIDSYSPSSYTENTNNNMENI). Positions 135–159 (QKAISTSQASTGPTDTIDSYSPSSY) are enriched in polar residues. Over residues 160–169 (TENTNNNMEN) the composition is skewed to low complexity.

In terms of tissue distribution, expressed exclusively in flower organs. Accumulates mostly in flower limbs, to a lower extent in pistils and flower tubes, and, at low levels, in stamens.

Its subcellular location is the nucleus. Its function is as follows. MYB-type transcription factor controlling the production of volatile organic compounds (VOCs), including floral volatile benzenoids and phenylpropanoids (FVBP), in flowers of fragrant cultivars (e.g. cv. Mitchell and cv. V26) by regulating the expression of ODO1, a key regulator of the shikimate pathway, and of several biosynthetic floral scent-related genes (e.g. IGS, EGS, BSMT1, BSMT2, PAL1, PAL2, EPSPS, DAHPS, CS, CM1, ADT1 and PPA-AT). Binds to and activates the promoters of at least ODO1, IGS1 and PAL1. This Petunia hybrida (Petunia) protein is MYB-like transcription factor EOBI.